A 326-amino-acid chain; its full sequence is Phospho-N-acetylmuramoyl-pentapeptide-transferase (326 aa).

The next 10 helical transmembrane spans lie at 2–22, 51–71, 73–93, 113–133, 143–163, 175–195, 199–219, 225–245, 250–270, and 305–325; these read ILATKVFFTSFVFGFILFPYF, VPPMGGIIILISSLLPILLWA, LTPEILLLILITLFFALLGFI, ILIQFIVALVGVFILKLYSAE, GVIIDFGYLYVPFAAFVIVGS, GLAATQVITSFAFLGLIAYIT, MNITLFCIAFIGAILSFLWFN, IFMGDVGSLSVGAALGLTSVL, MLFAIIGIIFVIETLSVIIQI, and VIVMKFWIISIICSVFTITFL.

Belongs to the glycosyltransferase 4 family. MraY subfamily. Mg(2+) is required as a cofactor.

It is found in the cell membrane. The catalysed reaction is UDP-N-acetyl-alpha-D-muramoyl-L-alanyl-gamma-D-glutamyl-meso-2,6-diaminopimeloyl-D-alanyl-D-alanine + di-trans,octa-cis-undecaprenyl phosphate = di-trans,octa-cis-undecaprenyl diphospho-N-acetyl-alpha-D-muramoyl-L-alanyl-D-glutamyl-meso-2,6-diaminopimeloyl-D-alanyl-D-alanine + UMP. It participates in cell wall biogenesis; peptidoglycan biosynthesis. Functionally, catalyzes the initial step of the lipid cycle reactions in the biosynthesis of the cell wall peptidoglycan: transfers peptidoglycan precursor phospho-MurNAc-pentapeptide from UDP-MurNAc-pentapeptide onto the lipid carrier undecaprenyl phosphate, yielding undecaprenyl-pyrophosphoryl-MurNAc-pentapeptide, known as lipid I. The protein is Phospho-N-acetylmuramoyl-pentapeptide-transferase of Wolbachia pipientis wMel.